The following is a 106-amino-acid chain: UPF0145 protein AZOSEA16190 (106 aa).

The protein belongs to the UPF0145 family.

This Aromatoleum aromaticum (strain DSM 19018 / LMG 30748 / EbN1) (Azoarcus sp. (strain EbN1)) protein is UPF0145 protein AZOSEA16190.